The chain runs to 806 residues: Plasminogen (806 aa).

The signal sequence occupies residues 1 to 19 (MEYGKVIFLFLLFLKSGQG). Positions 20–98 (ESLENYIKTE…RDVVLFEKRI (79 aa)) constitute a PAN domain. Disulfide bonds link Cys49/Cys73, Cys53/Cys61, Cys103/Cys181, Cys124/Cys164, Cys152/Cys176, Cys185/Cys262, Cys188/Cys316, Cys206/Cys245, Cys234/Cys257, Cys275/Cys352, Cys296/Cys335, Cys324/Cys347, Cys371/Cys448, Cys392/Cys431, Cys420/Cys443, Cys476/Cys555, Cys497/Cys538, Cys526/Cys550, Cys563/Cys681, Cys573/Cys581, and Cys603/Cys619. Kringle domains lie at 102–181 (DCKS…VPEC), 184–262 (ECMH…IPRC), 274–352 (QCLK…IPSC), 370–448 (ECYE…LEKC), and 475–555 (DCMY…IPQC). Residues 577-804 (IVGGCYAQPH…YISWIEDVMK (228 aa)) enclose the Peptidase S1 domain. Residue Ser593 is modified to Phosphoserine. Active-site charge relay system residues include His618 and Asp661. Ser684 is modified (phosphoserine). Cystine bridges form between Cys695–Cys762, Cys725–Cys741, and Cys752–Cys780. Catalysis depends on Ser756, which acts as the Charge relay system.

The protein belongs to the peptidase S1 family. Plasminogen subfamily. Interacts with CSPG4 and AMOT. Interacts (via the Kringle domains) with HRG; the interaction tethers PLG to the cell surface and enhances its activation. Interacts (via Kringle 4 domain) with ADA; the interaction stimulates PLG activation when in complex with DPP4. Angiostatin: Interacts with ATP5F1A; the interaction inhibits most of the angiogenic effects of angiostatin. In terms of processing, in the presence of the inhibitor, the activation involves only cleavage after Arg-576, yielding two chains held together by two disulfide bonds. In the absence of the inhibitor, the activation involves additionally the removal of the activation peptide.

It localises to the secreted. It catalyses the reaction Preferential cleavage: Lys-|-Xaa &gt; Arg-|-Xaa, higher selectivity than trypsin. Converts fibrin into soluble products.. Converted into plasmin by plasminogen activators, both plasminogen and its activator being bound to fibrin. Activated with catalytic amounts of streptokinase. Its function is as follows. Plasmin dissolves the fibrin of blood clots and acts as a proteolytic factor in a variety of other processes including embryonic development, tissue remodeling, tumor invasion, and inflammation. In ovulation, weakens the walls of the Graafian follicle. It activates the urokinase-type plasminogen activator, collagenases and several complement zymogens, such as C1, C4 and C5. Cleavage of fibronectin and laminin leads to cell detachment and apoptosis. Also cleaves fibrin, thrombospondin and von Willebrand factor. Its role in tissue remodeling and tumor invasion may be modulated by CSPG4. Binds to cells. The polypeptide is Plasminogen (PLG) (Notamacropus eugenii (Tammar wallaby)).